The following is a 439-amino-acid chain: Nitroalkane oxidase (439 aa).

FAD is bound by residues 131–134, 139–141, 169–171, arginine 304, 313–314, 375–379, and 400–404; these read LMHS, TAN, WPS, HQ, KAVGM, and LFDGG. Aspartate 402 functions as the Proton acceptor in the catalytic mechanism.

Belongs to the acyl-CoA dehydrogenase family. As to quaternary structure, homotetramer. Requires FAD as cofactor.

It carries out the reaction a primary nitroalkane + O2 + H2O = an aldehyde + nitrite + H2O2 + H(+). The catalysed reaction is a secondary nitroalkane + O2 + H2O = a ketone + nitrite + H2O2 + H(+). With respect to regulation, strongly inhibited by mercury chloride and KCN. Its function is as follows. Catalyzes the oxidative denitrification of neutral nitroalkanes, including 3-nitro-2-pentanol, 1-nitropropane, 2-nitropropane, nitroethane and nitrocyclohexane, and may thereby protect the organism against toxic compounds. Has no detectable acyl-CoA dehydrogenase activity. In Fusarium oxysporum (Fusarium vascular wilt), this protein is Nitroalkane oxidase.